Here is a 331-residue protein sequence, read N- to C-terminus: Putative type II secretion system C-type protein YghF (331 aa).

Residues 44–60 (MFWLMLLIISAKMAHSL) traverse the membrane as a helical segment.

It belongs to the GSP C family.

The protein localises to the cell inner membrane. In terms of biological role, involved in a type II secretion system (T2SS, formerly general secretion pathway, GSP) for the export of folded proteins across the outer membrane. The sequence is that of Putative type II secretion system C-type protein YghF from Escherichia coli (strain K12).